The following is a 93-amino-acid chain: Small ribosomal subunit protein bS20c (93 aa).

It belongs to the bacterial ribosomal protein bS20 family.

Its subcellular location is the plastid. It is found in the chloroplast. Functionally, binds directly to 16S ribosomal RNA. The chain is Small ribosomal subunit protein bS20c from Phaeodactylum tricornutum (strain CCAP 1055/1).